The following is a 417-amino-acid chain: NADH-quinone oxidoreductase subunit D (417 aa).

The protein belongs to the complex I 49 kDa subunit family. NDH-1 is composed of 14 different subunits. Subunits NuoB, C, D, E, F, and G constitute the peripheral sector of the complex.

The protein resides in the cell inner membrane. The catalysed reaction is a quinone + NADH + 5 H(+)(in) = a quinol + NAD(+) + 4 H(+)(out). Its function is as follows. NDH-1 shuttles electrons from NADH, via FMN and iron-sulfur (Fe-S) centers, to quinones in the respiratory chain. The immediate electron acceptor for the enzyme in this species is believed to be ubiquinone. Couples the redox reaction to proton translocation (for every two electrons transferred, four hydrogen ions are translocated across the cytoplasmic membrane), and thus conserves the redox energy in a proton gradient. This is NADH-quinone oxidoreductase subunit D from Methylobacillus flagellatus (strain ATCC 51484 / DSM 6875 / VKM B-1610 / KT).